The primary structure comprises 488 residues: Inositol 1,3,4-trisphosphate 5/6-kinase 4 (488 aa).

Positions 208 and 224 each coordinate 1D-myo-inositol 1,3,4-trisphosphate. In terms of domain architecture, ATP-grasp spans 246–488 (NACAIVDPIR…RFDQHVQEKH (243 aa)). ATP-binding residues include Arg-263 and Lys-315. His-326 and Lys-360 together coordinate 1D-myo-inositol 1,3,4-trisphosphate. ATP-binding positions include 349–360 (QEYVDHSSRIFK), Ser-375, and Ser-398. Mg(2+)-binding residues include Asp-439, Asp-453, and Asn-455. 1D-myo-inositol 1,3,4-trisphosphate-binding residues include Asn-455 and Ser-459.

The protein belongs to the ITPK1 family. As to quaternary structure, monomer. The cofactor is Mg(2+). As to expression, expressed in roots, leaf vasculature, cauline leaves, flower buds and siliques.

The catalysed reaction is 1D-myo-inositol 1,3,4-trisphosphate + ATP = 1D-myo-inositol 1,3,4,5-tetrakisphosphate + ADP + H(+). It catalyses the reaction 1D-myo-inositol 1,3,4-trisphosphate + ATP = 1D-myo-inositol 1,3,4,6-tetrakisphosphate + ADP + H(+). Kinase that can phosphorylate the inositol polyphosphate Ins(1,3,4)P3 to form InsP4. Also phosphorylates a racemic mixture of Ins(1,4,6)P3 and Ins(3,4,6)P3 to form InsP4. Does not display inositol 3,4,5,6-tetrakisphosphate 1-kinase activity, but possesses inositol 1,4,5,6-tetrakisphosphate and inositol 1,3,4,5-tetrakisphosphate isomerase activity. Ins(1,3,4,6)P4 is an essential molecule in the hexakisphosphate (InsP6) pathway. The polypeptide is Inositol 1,3,4-trisphosphate 5/6-kinase 4 (ITPK4) (Arabidopsis thaliana (Mouse-ear cress)).